Reading from the N-terminus, the 691-residue chain is MARAFPLERVRNIGIAAHIDAGKTTTTERILFYSGVVHKIGEVHDGAAVTDWMAQERERGITITAAAISTSWQEHRINIIDTPGHVDFTIEVERSMRVLDGVIAVFCAVGGVQPQSETVWRQADRYSVPRMVFVNKMDRTGADFLKVYDQIKDRLKANAAPIQLPIGAEGDLSGIIDLVSNKAHIYKNDLGTDIEETEIPSDMAEKAAEWRSKLMETVAETDEELIESFLENGELTIDQLKKGIREGVLKHGLVPMLCGSAFKNKGVQLVLDAVIDYLPAPIDVPPIQGVLPSGKDDVRPSEDNAPFSALAFKVMADPYGKLTFVRMYSGVLEKGSYVLNSTKDAKERISRLVVLKADDREEVDQLRAGDLGAVLGLKNTTTGDTLCSTDDPIVLETLFVPEPVISVAVEPKTKGDMEKLSKALVSLAEEDPTFRVSTDQETNQTVIAGMGELHLEILVDRMLREFKVEANIGAPQVSYRETIRSSSKGEGKYARQTGGKGQYGHVVIEMEPGEPGSGFEFINKIVGGVVPKEYIGPASNGMKETCESGVLAGYPLIDVKVTMVDGSFHDVDSSEMAFKIAGSMAFKDGVKKCNPVLLEPMMKVEVEVPEDFLGSIIGDLSSRRGQVEGQSIDDGISKVQSKVPLAEMFGYATQLRSMTQGRGIFSMEFSKYEEVPRNVAEAIISKNQGNS.

In terms of domain architecture, tr-type G spans E8–I282. Residues A17–T24, D81–H85, and N135–D138 contribute to the GTP site.

The protein belongs to the TRAFAC class translation factor GTPase superfamily. Classic translation factor GTPase family. EF-G/EF-2 subfamily.

It localises to the cytoplasm. Catalyzes the GTP-dependent ribosomal translocation step during translation elongation. During this step, the ribosome changes from the pre-translocational (PRE) to the post-translocational (POST) state as the newly formed A-site-bound peptidyl-tRNA and P-site-bound deacylated tRNA move to the P and E sites, respectively. Catalyzes the coordinated movement of the two tRNA molecules, the mRNA and conformational changes in the ribosome. The chain is Elongation factor G from Prochlorococcus marinus (strain SARG / CCMP1375 / SS120).